Reading from the N-terminus, the 190-residue chain is Dynein axonemal light chain 1 (190 aa).

Alanine 2 carries the N-acetylalanine modification. 4 LRR repeats span residues 49–70, 71–92, 94–115, and 116–137; these read NCEK…NGLK, NLRI…EAVG, TLEE…HVMK, and KLKI…VKLA. Serine 56 is subject to Phosphoserine. The 41-residue stretch at 150–190 folds into the LRRCT domain; it reads NPLEEKHSAEGNWVEEATKRVPKLKKLDGTPVIKEDEEEDN.

It belongs to the dynein light chain LC1-type family. Interacts with ZMYND10 (via C-terminus). Interacts with DNAH5, a outer arm dynein heavy chain. Interacts with tubulin located within the A-tubule of the outer doublets in a ATP-independent manner.

It localises to the cytoplasm. The protein resides in the cytoskeleton. It is found in the cilium axoneme. Functionally, part of the multisubunit axonemal ATPase complexes that generate the force for cilia motility and govern beat frequency. Component of the outer arm dynein (ODA). May be involved in a mechanosensory feedback mechanism controlling ODA activity based on external conformational cues by tethering the outer arm dynein heavy chain (DNAH5) to the microtubule within the axoneme. Important for ciliary function in the airways and for the function of the cilia that produce the nodal flow essential for the determination of the left-right asymmetry. This chain is Dynein axonemal light chain 1 (DNAL1), found in Bos taurus (Bovine).